The sequence spans 636 residues: MNLSDITHPNQLHGLSNRQLEDIARQIREKHLQTIAASGGHLGPGLGVVELTIALYQTLDLDRDKVIWDVGHQAYPHKMLTGRYHRFHTLRQKDGIAGYLKRCESNFDHFGAGHASTSISAGLGMALARDAKGEDYKVVSIIGDGALTGGMALEAINHAGHLPHTNLMVVLNDNEMSISPNVGAISRYLNKVRLSDPVQFLSDNLEEQFKHLPFFGESLTPEMERVKEGMKRLAMPKVGAVIEELGFKYFGPIDGHNLEELISTFKQAHKAGGPVFVHVATVKGKGYELAEKDQVGYHAQSPFNLATGKAIPSNKPKPPSYSKVFAHTLTTLAQNDPKIIGITAAMATGTGLDKLHAKLPKQYIDVGIAEQHAVTLSAGLACEGMRPVVAIYSTFLQRAYDQVLHDVCIQNLPVFFCLDRAGIVGADGPTHQGLYDIAYLRCIPNLTIMAPKDEAELQRMVVTGINHTDGPIAMRYPRGSGVGVPLMEEGWEPVSIGKGEILRNGDDVLLVGYGTMVHQSLQVAEILKEHGIEATVVNARFVKPLDTELIVPLAQRIGKVVTLEEGCLMGGFGSAVAEALLDHDVVVPIKRFGVPDKLVDHAKPDESKADLGLTSPQIAEEIRQLFFNTPQPSAVS.

Thiamine diphosphate-binding positions include histidine 72 and 113–115; that span reads GHA. Aspartate 144 contributes to the Mg(2+) binding site. Thiamine diphosphate contacts are provided by residues 145 to 146, asparagine 174, tyrosine 287, and glutamate 370; that span reads GA. Asparagine 174 contacts Mg(2+).

This sequence belongs to the transketolase family. DXPS subfamily. Homodimer. Mg(2+) serves as cofactor. The cofactor is thiamine diphosphate.

It catalyses the reaction D-glyceraldehyde 3-phosphate + pyruvate + H(+) = 1-deoxy-D-xylulose 5-phosphate + CO2. It functions in the pathway metabolic intermediate biosynthesis; 1-deoxy-D-xylulose 5-phosphate biosynthesis; 1-deoxy-D-xylulose 5-phosphate from D-glyceraldehyde 3-phosphate and pyruvate: step 1/1. Functionally, catalyzes the acyloin condensation reaction between C atoms 2 and 3 of pyruvate and glyceraldehyde 3-phosphate to yield 1-deoxy-D-xylulose-5-phosphate (DXP). The sequence is that of 1-deoxy-D-xylulose-5-phosphate synthase from Crocosphaera subtropica (strain ATCC 51142 / BH68) (Cyanothece sp. (strain ATCC 51142)).